The following is a 274-amino-acid chain: Copper chaperone for superoxide dismutase (274 aa).

An HMA domain is found at 11 to 74 (LCTLEFAVQM…LLEGTGRQAV (64 aa)). Cu cation-binding residues include cysteine 22 and cysteine 25. Lysine 76 participates in a covalent cross-link: Glycyl lysine isopeptide (Lys-Gly) (interchain with G-Cter in ubiquitin). Residues 88–234 (AAVAILGGPG…LACGIIARSA (147 aa)) are superoxide dismutase-like. Cysteine 141 and cysteine 227 form a disulfide bridge. Zn(2+) is bound by residues histidine 147, histidine 155, histidine 164, and aspartate 167. Residues lysine 189, lysine 216, and lysine 241 each participate in a glycyl lysine isopeptide (Lys-Gly) (interchain with G-Cter in ubiquitin) cross-link. Residues cysteine 244 and cysteine 246 each coordinate Cu cation. Serine 267 is modified (phosphoserine).

The protein in the C-terminal section; belongs to the Cu-Zn superoxide dismutase family. As to quaternary structure, homodimer, and heterodimer with SOD1. Interacts with COMMD1. Interacts with XIAP/BIRC4. Interacts with SLC31A1(via C-terminal domain); this interaction is Cu(1+)-mediated. The heterodimer CCS:SOD1 interacts with SLC31A1; this heterotrimer is Cu(1+)-mediated and its maintenance is regulated through SOD1 activation. Cu(2+) serves as cofactor. The cofactor is Zn(2+). Ubiquitinion by XIAP/BIRC4 leads to enhancement of its chaperone activity toward its physiologic target, SOD1, rather than proteasomal degradation. XIAP/BIRC4 preferentially ubiquitinates at Lys-241. As to expression, ubiquitous.

The protein resides in the cytoplasm. Functionally, delivers copper to copper zinc superoxide dismutase (SOD1). This is Copper chaperone for superoxide dismutase from Homo sapiens (Human).